A 159-amino-acid chain; its full sequence is U1 small nuclear ribonucleoprotein C (159 aa).

A Matrin-type zinc finger spans residues 4–36 (FYCDYCDTYLTHDSPSVRKTHCSGRKHKENVKD). At Tyr-8 the chain carries Phosphotyrosine. Residue Ser-17 is modified to Phosphoserine. At Lys-52 the chain carries N6-acetyllysine. 2 disordered regions span residues 62–96 (IPPT…PAPH) and 140–159 (RPPA…RPDR). A compositionally biased stretch (pro residues) spans 63–92 (PPTPFSAPPPAGAMIPPPPSLPGPPRPGMM).

This sequence belongs to the U1 small nuclear ribonucleoprotein C family. In terms of assembly, component of the U1 snRNP. The U1 snRNP is composed of the U1 snRNA and the 7 core Sm proteins SNRPB, SNRPD1, SNRPD2, SNRPD3, SNRPE, SNRPF and SNRPG that assemble in a heptameric protein ring on the Sm site of the small nuclear RNA to form the core snRNP, and at least 3 U1 snRNP-specific proteins SNRNP70/U1-70K, SNRPA/U1-A and SNRPC/U1-C. SNRPC/U1-C interacts with U1 snRNA and the 5' splice-site region of the pre-mRNA. Interacts (via N-terminus) with TIA1 (via C-terminus); thereby promoting spliceosomal U1 snRNP recruitment to 5' splice sites.

The protein localises to the nucleus. Component of the spliceosomal U1 snRNP, which is essential for recognition of the pre-mRNA 5' splice-site and the subsequent assembly of the spliceosome. SNRPC/U1-C is directly involved in initial 5' splice-site recognition for both constitutive and regulated alternative splicing. The interaction with the 5' splice-site seems to precede base-pairing between the pre-mRNA and the U1 snRNA. Stimulates commitment or early (E) complex formation by stabilizing the base pairing of the 5' end of the U1 snRNA and the 5' splice-site region. This is U1 small nuclear ribonucleoprotein C from Homo sapiens (Human).